The following is a 317-amino-acid chain: Acetyl-coenzyme A carboxylase carboxyl transferase subunit alpha (317 aa).

A CoA carboxyltransferase C-terminal domain is found at 40 to 293 (LEKRSADALK…GDIIAASLRS (254 aa)).

The protein belongs to the AccA family. In terms of assembly, acetyl-CoA carboxylase is a heterohexamer composed of biotin carboxyl carrier protein (AccB), biotin carboxylase (AccC) and two subunits each of ACCase subunit alpha (AccA) and ACCase subunit beta (AccD).

It is found in the cytoplasm. The enzyme catalyses N(6)-carboxybiotinyl-L-lysyl-[protein] + acetyl-CoA = N(6)-biotinyl-L-lysyl-[protein] + malonyl-CoA. It participates in lipid metabolism; malonyl-CoA biosynthesis; malonyl-CoA from acetyl-CoA: step 1/1. Its function is as follows. Component of the acetyl coenzyme A carboxylase (ACC) complex. First, biotin carboxylase catalyzes the carboxylation of biotin on its carrier protein (BCCP) and then the CO(2) group is transferred by the carboxyltransferase to acetyl-CoA to form malonyl-CoA. The polypeptide is Acetyl-coenzyme A carboxylase carboxyl transferase subunit alpha (Brucella canis (strain ATCC 23365 / NCTC 10854 / RM-666)).